Reading from the N-terminus, the 433-residue chain is Histidinol dehydrogenase (433 aa).

3 residues coordinate NAD(+): Tyr129, Gln191, and Asn214. Residues Ser237, Gln259, and His262 each contribute to the substrate site. Zn(2+) contacts are provided by Gln259 and His262. Catalysis depends on proton acceptor residues Glu326 and His327. Substrate-binding residues include His327, Asp360, Glu414, and His419. Position 360 (Asp360) interacts with Zn(2+). Position 419 (His419) interacts with Zn(2+).

The protein belongs to the histidinol dehydrogenase family. Zn(2+) serves as cofactor.

It catalyses the reaction L-histidinol + 2 NAD(+) + H2O = L-histidine + 2 NADH + 3 H(+). It functions in the pathway amino-acid biosynthesis; L-histidine biosynthesis; L-histidine from 5-phospho-alpha-D-ribose 1-diphosphate: step 9/9. Catalyzes the sequential NAD-dependent oxidations of L-histidinol to L-histidinaldehyde and then to L-histidine. The protein is Histidinol dehydrogenase of Methanosarcina mazei (strain ATCC BAA-159 / DSM 3647 / Goe1 / Go1 / JCM 11833 / OCM 88) (Methanosarcina frisia).